The primary structure comprises 497 residues: Cytochrome P450 71A20 (497 aa).

A helical transmembrane segment spans residues 3 to 23 (MILITLCLTTLLALLLKSILK). Heme is bound at residue C440.

It belongs to the cytochrome P450 family. Requires heme as cofactor.

Its subcellular location is the membrane. The protein is Cytochrome P450 71A20 (CYP71A20) of Arabidopsis thaliana (Mouse-ear cress).